The following is a 406-amino-acid chain: Acetyltransferase sirH (406 aa).

6 helical membrane passes run 9–29 (IFIE…FALG), 32–52 (AHTF…CQSL), 63–83 (LLSN…WILL), 295–315 (VQLF…ALLC), 323–343 (SALF…HVIA), and 358–378 (FIGF…WVGS).

The protein belongs to the wax synthase family.

It localises to the membrane. It participates in mycotoxin biosynthesis. Functionally, acetyltransferase; part of the gene cluster that mediates the biosynthesis of sirodesmin PL, an epipolythiodioxopiperazine (ETP) characterized by a disulfide bridged cyclic dipeptide and that acts as a phytotoxin which is involved in the blackleg didease of canola. SirD catalyzes the O-prenylation of L-tyrosine (L-Tyr) in the presence of dimethylallyl diphosphate (DMAPP) to yield 4-O-dimethylallyl-L-Tyr, and therefore represents probably the first pathway-specific enzyme in the biosynthesis of sirodesmin PL. 4-O-dimethylallyl-L-Tyr, then undergoes condensation with L-Ser in a reaction catalyzed by the non-ribosomal peptide synthase sirP to form the diketopiperazine (DKP) backbone. Further bishydroxylation of the DKP performed by the cytochrome P450 monooxygenase sirC leads to the production of the intermediate phomamide. This step is essential to form the reactive thiol group required for toxicity of sirodesmin PL. The next steps of sirodesmin biosynthesis are not well understood yet, but some predictions could be made from intermediate compounds identification. Phomamide is converted into phomalizarine via oxidation, probably by sirT. Further oxidation, methylation (by sirM or sirN) and reduction steps convert phomalizarine to deacetyl sirodesmin. Finally, acetyltransferase sirH probably acetylates deacetyl sirodesmin to produce sirodesmin PL. The protein is Acetyltransferase sirH of Leptosphaeria maculans (Blackleg fungus).